The primary structure comprises 451 residues: ACT domain-containing protein ACR4 (451 aa).

ACT domains are found at residues 35-118, 123-200, 259-335, and 337-416; these read VIRV…VIPS, VIEL…NTPR, VVTV…VSEG, and KLEL…QEQQ. Positions 409–428 are disordered; it reads KNNPQEQQQRQKSPSHESPT. The segment covering 410 to 420 has biased composition (polar residues); that stretch reads NNPQEQQQRQK.

In terms of tissue distribution, highly expressed in flowers and at lower levels in leaves and siliques.

Functionally, may bind amino acids. This chain is ACT domain-containing protein ACR4, found in Arabidopsis thaliana (Mouse-ear cress).